The following is a 154-amino-acid chain: Egg-lysin (154 aa).

Residues 1 to 18 (MKLLVLCIFAMMATLAMS) form the signal peptide.

Homodimer. Sperm.

In terms of biological role, dissolves the egg vitelline layer nonenzymatically during fertilization. It creates a hole of about 3 mu-m in diameter through which the sperm pass. This chain is Egg-lysin, found in Haliotis walallensis (Flat abalone).